We begin with the raw amino-acid sequence, 242 residues long: UPF0273 protein MJ1359 (242 aa).

One can recognise a KaiC domain in the interval 2 to 242; it reads KRVKTGIPGM…VYPDKVLKLR (241 aa). 29–36 provides a ligand contact to ATP; sequence GGPGTGKS.

The protein belongs to the UPF0273 family.

The polypeptide is UPF0273 protein MJ1359 (Methanocaldococcus jannaschii (strain ATCC 43067 / DSM 2661 / JAL-1 / JCM 10045 / NBRC 100440) (Methanococcus jannaschii)).